Here is a 749-residue protein sequence, read N- to C-terminus: Homeobox-leucine zipper protein ROC7 (749 aa).

Positions 26 to 98 (LDQHQQHQHQ…KKRYHRHTQH (73 aa)) are disordered. Residues 46–57 (SDGRAPRDELEM) are compositionally biased toward basic and acidic residues. The span at 68–79 (SGGGGGGGGSGG) shows a compositional bias: gly residues. Positions 86–97 (RPRKKRYHRHTQ) are enriched in basic residues. Positions 88-147 (RKKRYHRHTQHQIQELEAFFKECPHPDDKQRKELSRELGLEPLQVKFWFQNKRTQMKTQH) form a DNA-binding region, homeobox. Residues 137 to 218 (QNKRTQMKTQ…DRISAIAAKY (82 aa)) are a coiled coil. The region spanning 256–494 (ADFDKPLVIE…LERQCERLAS (239 aa)) is the START domain.

This sequence belongs to the HD-ZIP homeobox family. Class IV subfamily.

It localises to the nucleus. Probable transcription factor. This is Homeobox-leucine zipper protein ROC7 (ROC7) from Oryza sativa subsp. japonica (Rice).